A 618-amino-acid polypeptide reads, in one-letter code: MAKLRSATSTEGRNMAGARALWRATGVKDTDFGKPIIAIANSFTQFVPGHVHLKDMGSLVASAIEEAGGIAKEFNTIAVDDGIAMGHGGMLYSLPSRELIADSVEYMVNAHCADALVCISNCDKITPGMLMAALRLNIPVVFVSGGPMEAGKTKLSDKLIKLDLVDAMVAAADDRISDADSEKIERSACPTCGSCSGMFTANSMNCLTEALGLSLPGNGSMLATHADRRELFLEAGRRVMKLAKRYYGDDDASVLPRSIASFKAFENAMALDVAMGGSSNTVLHLLAAAQEAEVDFTMDDIDRISRKVPHLCKVAPSTPKYHMEDVHRAGGVMAILGELDRAGLLHTDVNHVASEDGTLKSVLERFDVVLTKDEKVHEFFRAGPAGIPTTRAFSQSCRWDTLDDDRREGCIRSREFAFSQEGGLAVLSGNLAENGCIVKTAGVDESNLKFSGVARVYESQEDAVAGILGGEVVAGDVVVIRFEGPKGGPGMQEMLYPTSYLKSRGLGTQCALITDGRFSGGTSGLSIGHVSPEAASGGTIGLIENGDRIDIDIPGRSIKLLVSDAELESRRAAMNAKGPLAWKPLSRVRPVSMALKAYAMLATSADKGAVRDVSKLEG.

Asp81 is a binding site for Mg(2+). Cys122 is a [2Fe-2S] cluster binding site. Positions 123 and 124 each coordinate Mg(2+). Residue Lys124 is modified to N6-carboxylysine. Cys195 lines the [2Fe-2S] cluster pocket. Residue Glu493 coordinates Mg(2+). The active-site Proton acceptor is Ser519.

Belongs to the IlvD/Edd family. In terms of assembly, homodimer. Requires [2Fe-2S] cluster as cofactor. Mg(2+) is required as a cofactor.

The enzyme catalyses (2R)-2,3-dihydroxy-3-methylbutanoate = 3-methyl-2-oxobutanoate + H2O. It carries out the reaction (2R,3R)-2,3-dihydroxy-3-methylpentanoate = (S)-3-methyl-2-oxopentanoate + H2O. It participates in amino-acid biosynthesis; L-isoleucine biosynthesis; L-isoleucine from 2-oxobutanoate: step 3/4. The protein operates within amino-acid biosynthesis; L-valine biosynthesis; L-valine from pyruvate: step 3/4. In terms of biological role, functions in the biosynthesis of branched-chain amino acids. Catalyzes the dehydration of (2R,3R)-2,3-dihydroxy-3-methylpentanoate (2,3-dihydroxy-3-methylvalerate) into 2-oxo-3-methylpentanoate (2-oxo-3-methylvalerate) and of (2R)-2,3-dihydroxy-3-methylbutanoate (2,3-dihydroxyisovalerate) into 2-oxo-3-methylbutanoate (2-oxoisovalerate), the penultimate precursor to L-isoleucine and L-valine, respectively. In Shewanella amazonensis (strain ATCC BAA-1098 / SB2B), this protein is Dihydroxy-acid dehydratase.